A 114-amino-acid polypeptide reads, in one-letter code: Iron-sulfur cluster insertion protein ErpA (114 aa).

3 residues coordinate iron-sulfur cluster: C42, C106, and C108.

This sequence belongs to the HesB/IscA family. As to quaternary structure, homodimer. Iron-sulfur cluster serves as cofactor.

Required for insertion of 4Fe-4S clusters for at least IspG. The protein is Iron-sulfur cluster insertion protein ErpA of Yersinia enterocolitica serotype O:8 / biotype 1B (strain NCTC 13174 / 8081).